A 438-amino-acid chain; its full sequence is Protein maelstrom 1 (438 aa).

Residues 2-69 constitute a DNA-binding region (HMG box); it reads APKKRNGFMT…LERTAKKERL (68 aa). The disordered stretch occupies residues 374 to 438; it reads KEMGSRDLSP…NMGAGKKIAR (65 aa). Positions 381-391 are enriched in polar residues; it reads LSPSSSHQSVS.

Belongs to the maelstrom family.

It is found in the cytoplasm. The protein resides in the nucleus. Functionally, involved both in the piRNA and miRNA metabolic processes. As a component of the meiotic nuage, plays a central role during oogenesis by repressing transposable elements and preventing their mobilization, which is essential for the germline integrity. Repression of transposable elements is mediated via the piRNA metabolic process, which mediates the repression of transposable elements during meiosis by forming complexes composed of piRNAs and Piwi proteins and governs the repression of transposons. As a nuclear component, it is required for proper differentiation in the germline stem cell (GSC) lineage by repressing microRNA-7 (miR-7), thereby acting as an indirect regulator of bag-of-marbles (Bam). Acts by binding to the promoter of miR-7 gene and repressing its expression; miR-7 repression alleviates the Bam repression by miR-7, thereby allowing differentiation in the germline stem cell (GSC) lineage. This is Protein maelstrom 1 (mael1) from Drosophila persimilis (Fruit fly).